The chain runs to 391 residues: F-box/kelch-repeat protein At3g16740 (391 aa).

In terms of domain architecture, F-box spans 1-47; that stretch reads MVQISDLPRDLTEEVLSRIPVTSMRAVRFTCKKWNTLSKDRSFTKKH. 2 Kelch repeats span residues 104 to 154 and 163 to 215; these read KIFH…YEEK and ILRF…LKGN.

Part of a SCF (ASK-cullin-F-box) protein ligase complex. Interacts with ASK11.

The protein resides in the nucleus. The protein operates within protein modification; protein ubiquitination. In terms of biological role, component of SCF(ASK-cullin-F-box) E3 ubiquitin ligase complexes, which may mediate the ubiquitination and subsequent proteasomal degradation of target proteins. This Arabidopsis thaliana (Mouse-ear cress) protein is F-box/kelch-repeat protein At3g16740.